The chain runs to 301 residues: Polyamine aminopropyltransferase (301 aa).

The region spanning Trp-4–Val-240 is the PABS domain. Gln-33 provides a ligand contact to S-methyl-5'-thioadenosine. The spermidine site is built by His-64 and Glu-89. Residues Asp-109 and Asp-141–Gly-142 each bind S-methyl-5'-thioadenosine. Asp-159 functions as the Proton acceptor in the catalytic mechanism.

The protein belongs to the spermidine/spermine synthase family. In terms of assembly, homodimer or homotetramer.

The protein localises to the cytoplasm. The catalysed reaction is S-adenosyl 3-(methylsulfanyl)propylamine + putrescine = S-methyl-5'-thioadenosine + spermidine + H(+). Its pathway is amine and polyamine biosynthesis; spermidine biosynthesis; spermidine from putrescine: step 1/1. Functionally, catalyzes the irreversible transfer of a propylamine group from the amino donor S-adenosylmethioninamine (decarboxy-AdoMet) to putrescine (1,4-diaminobutane) to yield spermidine. The protein is Polyamine aminopropyltransferase of Saccharolobus islandicus (strain L.S.2.15 / Lassen #1) (Sulfolobus islandicus).